Reading from the N-terminus, the 202-residue chain is tRNA (pseudouridine(54)-N(1))-methyltransferase (202 aa).

Positions 134 and 155 each coordinate S-adenosyl-L-methionine.

Belongs to the methyltransferase superfamily. TrmY family. As to quaternary structure, homodimer.

Its subcellular location is the cytoplasm. The catalysed reaction is pseudouridine(54) in tRNA + S-adenosyl-L-methionine = N(1)-methylpseudouridine(54) in tRNA + S-adenosyl-L-homocysteine + H(+). Its function is as follows. Specifically catalyzes the N1-methylation of pseudouridine at position 54 (Psi54) in tRNAs. This Thermococcus gammatolerans (strain DSM 15229 / JCM 11827 / EJ3) protein is tRNA (pseudouridine(54)-N(1))-methyltransferase.